The chain runs to 174 residues: Cytochrome c-550-like protein (174 aa).

The first 37 residues, 1-37 (MPGQTQGAKRWRVPGRGWRWAGILLLVWLGLASPAAG), serve as a signal peptide directing secretion. Residues Cys-82, Cys-85, His-86, and Cys-136 each contribute to the heme c site.

This sequence belongs to the cytochrome c family. PsbV subfamily. Heme c serves as cofactor.

It is found in the cellular thylakoid membrane. Possible low-potential cytochrome c. This Synechococcus sp. (strain JA-3-3Ab) (Cyanobacteria bacterium Yellowstone A-Prime) protein is Cytochrome c-550-like protein (psbV2).